A 476-amino-acid polypeptide reads, in one-letter code: Ribulose bisphosphate carboxylase large chain (476 aa).

Asparagine 124 and threonine 174 together coordinate substrate. Lysine 176 serves as the catalytic Proton acceptor. Lysine 178 is a binding site for substrate. Lysine 202, aspartate 204, and glutamate 205 together coordinate Mg(2+). Residue lysine 202 is modified to N6-carboxylysine. Histidine 295 acts as the Proton acceptor in catalysis. Residues arginine 296, histidine 328, and serine 380 each contribute to the substrate site.

The protein belongs to the RuBisCO large chain family. Type I subfamily. In terms of assembly, heterohexadecamer of 8 large chains and 8 small chains; disulfide-linked. The disulfide link is formed within the large subunit homodimers. Requires Mg(2+) as cofactor. Post-translationally, the disulfide bond which can form in the large chain dimeric partners within the hexadecamer appears to be associated with oxidative stress and protein turnover.

Its subcellular location is the carboxysome. It catalyses the reaction 2 (2R)-3-phosphoglycerate + 2 H(+) = D-ribulose 1,5-bisphosphate + CO2 + H2O. It carries out the reaction D-ribulose 1,5-bisphosphate + O2 = 2-phosphoglycolate + (2R)-3-phosphoglycerate + 2 H(+). RuBisCO catalyzes two reactions: the carboxylation of D-ribulose 1,5-bisphosphate, the primary event in carbon dioxide fixation, as well as the oxidative fragmentation of the pentose substrate in the photorespiration process. Both reactions occur simultaneously and in competition at the same active site. The chain is Ribulose bisphosphate carboxylase large chain from Trichormus variabilis (strain ATCC 29413 / PCC 7937) (Anabaena variabilis).